A 121-amino-acid chain; its full sequence is uncharacterized protein (121 aa).

This is an uncharacterized protein from Bacillus subtilis (strain 168).